Here is a 281-residue protein sequence, read N- to C-terminus: Pantothenate synthetase (281 aa).

Position 30 to 37 (30 to 37 (MGYLHEGH)) interacts with ATP. The active-site Proton donor is His-37. Gln-61 is a (R)-pantoate binding site. Gln-61 is a binding site for beta-alanine. 147–150 (GQKD) is a binding site for ATP. Gln-153 serves as a coordination point for (R)-pantoate. Residues Val-176 and 184–187 (MSSR) contribute to the ATP site.

This sequence belongs to the pantothenate synthetase family. As to quaternary structure, homodimer.

Its subcellular location is the cytoplasm. It carries out the reaction (R)-pantoate + beta-alanine + ATP = (R)-pantothenate + AMP + diphosphate + H(+). Its pathway is cofactor biosynthesis; (R)-pantothenate biosynthesis; (R)-pantothenate from (R)-pantoate and beta-alanine: step 1/1. Its function is as follows. Catalyzes the condensation of pantoate with beta-alanine in an ATP-dependent reaction via a pantoyl-adenylate intermediate. This chain is Pantothenate synthetase, found in Heliobacterium modesticaldum (strain ATCC 51547 / Ice1).